The following is a 598-amino-acid chain: Elongation factor 4 (598 aa).

The 183-residue stretch at 2-184 (NRIRNFSIIA…TIVAKLPPPK (183 aa)) folds into the tr-type G domain. Residues 14–19 (DHGKST) and 131–134 (NKID) each bind GTP.

This sequence belongs to the TRAFAC class translation factor GTPase superfamily. Classic translation factor GTPase family. LepA subfamily.

It is found in the cell inner membrane. It carries out the reaction GTP + H2O = GDP + phosphate + H(+). In terms of biological role, required for accurate and efficient protein synthesis under certain stress conditions. May act as a fidelity factor of the translation reaction, by catalyzing a one-codon backward translocation of tRNAs on improperly translocated ribosomes. Back-translocation proceeds from a post-translocation (POST) complex to a pre-translocation (PRE) complex, thus giving elongation factor G a second chance to translocate the tRNAs correctly. Binds to ribosomes in a GTP-dependent manner. The sequence is that of Elongation factor 4 from Desulfosudis oleivorans (strain DSM 6200 / JCM 39069 / Hxd3) (Desulfococcus oleovorans).